The primary structure comprises 129 residues: MKKAGILNRHLAGALAELGHGHGVLVCDAGMPIPVGPRVVDLAFRAGVPSFAEVLDGLLDELVVEGATAAREVREANPGATALLQTRFPALELVPHEELKSLSANARLIVRTGEARPYANVLLRCGVFF.

Catalysis depends on H20, which acts as the Proton donor. Substrate-binding positions include D28, H96, and 118–120 (YAN).

Belongs to the RbsD / FucU family. RbsD subfamily. As to quaternary structure, homodecamer.

It localises to the cytoplasm. The catalysed reaction is beta-D-ribopyranose = beta-D-ribofuranose. It participates in carbohydrate metabolism; D-ribose degradation; D-ribose 5-phosphate from beta-D-ribopyranose: step 1/2. In terms of biological role, catalyzes the interconversion of beta-pyran and beta-furan forms of D-ribose. This chain is D-ribose pyranase, found in Streptomyces avermitilis (strain ATCC 31267 / DSM 46492 / JCM 5070 / NBRC 14893 / NCIMB 12804 / NRRL 8165 / MA-4680).